The following is a 75-amino-acid chain: Large ribosomal subunit protein bL31 (75 aa).

This sequence belongs to the bacterial ribosomal protein bL31 family. Type A subfamily. Part of the 50S ribosomal subunit.

Binds the 23S rRNA. The chain is Large ribosomal subunit protein bL31 from Chlorobaculum tepidum (strain ATCC 49652 / DSM 12025 / NBRC 103806 / TLS) (Chlorobium tepidum).